Here is a 428-residue protein sequence, read N- to C-terminus: Putative oxidoreductase YteT (428 aa).

Residues 1-23 form the signal peptide; the sequence is MKNIVFCGLSSRAFSMFIKPLME.

It belongs to the Gfo/Idh/MocA family.

Its function is as follows. May play a role in the degradation of type I rhamnogalacturonan derived from plant cell walls. In Bacillus subtilis (strain 168), this protein is Putative oxidoreductase YteT (yteT).